The sequence spans 148 residues: Wound-induced proteinase inhibitor 2 (148 aa).

The signal sequence occupies residues 1–25; that stretch reads MAVHKEVNFVAYLLIVLGMFLYVDA. The stretch at 26-81 is one 1; trypsin-inhibitory repeat; that stretch reads KACTRECGNLGFGICPRSEGSPLNPICINCCSGYKGCNYYNSFGKFICEGESDPKR. 8 cysteine pairs are disulfide-bonded: Cys-28/Cys-116, Cys-32/Cys-112, Cys-40/Cys-122, Cys-52/Cys-89, Cys-55/Cys-73, Cys-56/Cys-85, Cys-62/Cys-98, and Cys-115/Cys-133. One copy of the 2; chymotrypsin-inhibitory repeat lies at 83 to 141; that stretch reads NACTFNCDPNIAYSRCPRSQGKSLIYPTGCTTCCTGYKGCYYFGKDGKFVCEGESDEPK.

The protein belongs to the protease inhibitor I20 (potato type II proteinase inhibitor) family.

The protein localises to the secreted. Functionally, potent inhibitor of both trypsin and chymotrypsin. The polypeptide is Wound-induced proteinase inhibitor 2 (Solanum lycopersicum (Tomato)).